The following is a 198-amino-acid chain: Ribonuclease HII (198 aa).

The region spanning 10 to 198 (HLVAGVDEVG…PVKRALELAS (189 aa)) is the RNase H type-2 domain. Positions 16, 17, and 108 each coordinate a divalent metal cation.

It belongs to the RNase HII family. It depends on Mn(2+) as a cofactor. Mg(2+) serves as cofactor.

It localises to the cytoplasm. The enzyme catalyses Endonucleolytic cleavage to 5'-phosphomonoester.. Endonuclease that specifically degrades the RNA of RNA-DNA hybrids. The protein is Ribonuclease HII of Salmonella arizonae (strain ATCC BAA-731 / CDC346-86 / RSK2980).